A 96-amino-acid polypeptide reads, in one-letter code: MSTIMKHTVGFIASIVLTLLAVYVTLYTSLTFHAKLTIIFGFAFVQAGLQLLMFMHLTEGKDGRLQTFKVIFALVITLCFVVGTYWVMQGGHSSHL.

Helical transmembrane passes span 8–28 (TVGF…TLYT), 36–56 (LTII…MFMH), and 68–88 (FKVI…YWVM).

This sequence belongs to the cytochrome c oxidase bacterial subunit 4 family.

It localises to the cell membrane. It carries out the reaction 2 a quinol + O2 = 2 a quinone + 2 H2O. Functionally, catalyzes quinol oxidation with the concomitant reduction of oxygen to water. This Staphylococcus aureus (strain USA300) protein is Probable quinol oxidase subunit 4 (qoxD).